A 395-amino-acid chain; its full sequence is S-adenosylmethionine synthase (395 aa).

H15 lines the ATP pocket. Mg(2+) is bound at residue D17. Residue E43 coordinates K(+). L-methionine is bound at residue Q99. The flexible loop stretch occupies residues 99–109; the sequence is QSPDIAMGVNE. Residues 174–176, 240–241, D249, 255–256, A272, and K276 contribute to the ATP site; these read DGK, RF, and RK. D249 serves as a coordination point for L-methionine. L-methionine is bound at residue K280.

This sequence belongs to the AdoMet synthase family. Homotetramer; dimer of dimers. It depends on Mg(2+) as a cofactor. The cofactor is K(+).

Its subcellular location is the cytoplasm. The catalysed reaction is L-methionine + ATP + H2O = S-adenosyl-L-methionine + phosphate + diphosphate. It functions in the pathway amino-acid biosynthesis; S-adenosyl-L-methionine biosynthesis; S-adenosyl-L-methionine from L-methionine: step 1/1. Its function is as follows. Catalyzes the formation of S-adenosylmethionine (AdoMet) from methionine and ATP. The overall synthetic reaction is composed of two sequential steps, AdoMet formation and the subsequent tripolyphosphate hydrolysis which occurs prior to release of AdoMet from the enzyme. The polypeptide is S-adenosylmethionine synthase (Moorella thermoacetica (strain ATCC 39073 / JCM 9320)).